Here is a 552-residue protein sequence, read N- to C-terminus: Urocanate hydratase (552 aa).

NAD(+)-binding positions include 49–50 (GG), Gln127, 173–175 (GMG), Asp193, 239–240 (NA), 260–264 (QTSAH), 270–271 (YI), and Tyr319. The active site involves Cys407. Gly489 serves as a coordination point for NAD(+).

It belongs to the urocanase family. Requires NAD(+) as cofactor.

The protein resides in the cytoplasm. It catalyses the reaction 4-imidazolone-5-propanoate = trans-urocanate + H2O. It functions in the pathway amino-acid degradation; L-histidine degradation into L-glutamate; N-formimidoyl-L-glutamate from L-histidine: step 2/3. Catalyzes the conversion of urocanate to 4-imidazolone-5-propionate. In Bacillus anthracis (strain CDC 684 / NRRL 3495), this protein is Urocanate hydratase.